The chain runs to 94 residues: Preprofallaxidin-9 (94 aa).

Positions 1 to 22 (MASLKKSLFLVLFLGLVSLSIC) are cleaved as a signal peptide. A propeptide spanning residues 23–46 (EEEKRENEEDAEDENHEEESEEKR) is cleaved from the precursor. Residues 27-46 (RENEEDAEDENHEEESEEKR) are disordered. The span at 30–42 (EEDAEDENHEEES) shows a compositional bias: acidic residues. L62 is subject to Leucine amide. A propeptide spanning residues 66–70 (SEEKR) is cleaved from the precursor. Position 75 is a methionine amide (M75). A propeptide spanning residues 79–83 (SEEKR) is cleaved from the precursor. At M88 the chain carries Methionine amide. A propeptide spanning residues 92 to 94 (SEE) is cleaved from the precursor.

The protein belongs to the frog skin active peptide (FSAP) family. Brevinin subfamily. Expressed by the skin glands.

The protein localises to the secreted. Fallaxidin-1.3 shows no antibacterial activity against Gram-positive or Gram-negative bacteria. Does not inhibit the formation of NO by neuronal nitric oxide synthase. Has no effect on splenocyte proliferation or smooth muscle contraction. Functionally, fallaxidin-3.2 shows antibacterial activity against the Gram-positive bacteria E.faecalis (MIC=100 uM) and L.lactis (MIC=500 uM). No antibacterial activity against the Gram-positive bacteria B.cereus, L.innocua, M.luteus, S.epidermidis, S.uberis and S.aureus, or the Gram-negative bacteria E.cloacae and E.coli. The sequence is that of Preprofallaxidin-9 from Litoria fallax (Eastern dwarf tree frog).